Here is a 158-residue protein sequence, read N- to C-terminus: Transcription elongation factor GreA (158 aa).

Residues 47–74 (NSEYDEAKNEQAFTEGRIIQLENMLKNA) are a coiled coil.

This sequence belongs to the GreA/GreB family.

Its function is as follows. Necessary for efficient RNA polymerase transcription elongation past template-encoded arresting sites. The arresting sites in DNA have the property of trapping a certain fraction of elongating RNA polymerases that pass through, resulting in locked ternary complexes. Cleavage of the nascent transcript by cleavage factors such as GreA or GreB allows the resumption of elongation from the new 3'terminus. GreA releases sequences of 2 to 3 nucleotides. The polypeptide is Transcription elongation factor GreA (Clostridium perfringens (strain ATCC 13124 / DSM 756 / JCM 1290 / NCIMB 6125 / NCTC 8237 / Type A)).